The sequence spans 238 residues: Orotidine 5'-phosphate decarboxylase (238 aa).

Residues Asp-10, Lys-32, 59–68 (DLKLHDIPNT), Thr-122, Arg-184, Gln-193, Gly-213, and Arg-214 contribute to the substrate site. Lys-61 functions as the Proton donor in the catalytic mechanism.

This sequence belongs to the OMP decarboxylase family. Type 1 subfamily. As to quaternary structure, homodimer.

The enzyme catalyses orotidine 5'-phosphate + H(+) = UMP + CO2. Its pathway is pyrimidine metabolism; UMP biosynthesis via de novo pathway; UMP from orotate: step 2/2. Catalyzes the decarboxylation of orotidine 5'-monophosphate (OMP) to uridine 5'-monophosphate (UMP). This is Orotidine 5'-phosphate decarboxylase from Bacillus thuringiensis subsp. konkukian (strain 97-27).